The sequence spans 310 residues: AMMECR1-like protein (310 aa).

The segment at 26–95 is disordered; it reads LSGSGTHSHG…LSPLPRPNGT (70 aa). A compositionally biased stretch (polar residues) spans 28–66; sequence GSGTHSHGNQSTTVPGSSSGPLQNHQHVDSSSGRENVSD. A Phosphoserine modification is found at Ser74. The AMMECR1 domain maps to 97–291; it reads NTTKNLVVTA…ISYAEYIASR (195 aa).

The sequence is that of AMMECR1-like protein (AMMECR1L) from Homo sapiens (Human).